A 449-amino-acid chain; its full sequence is Required for meiotic nuclear division protein 1 homolog (449 aa).

The N-terminal 12 residues, 1 to 12, are a transit peptide targeting the mitochondrion; that stretch reads MPATLLRAVARS.

The protein belongs to the RMD1/sif2 family. Homooligomer.

It is found in the mitochondrion. In terms of biological role, required for mitochondrial translation, possibly by coordinating the assembly or maintenance of the mitochondrial ribosome. This Homo sapiens (Human) protein is Required for meiotic nuclear division protein 1 homolog (RMND1).